The chain runs to 852 residues: Probable inorganic carbon transporter subunit DabA (852 aa).

Zn(2+) contacts are provided by C370, D372, H554, and C569.

The protein belongs to the inorganic carbon transporter (TC 9.A.2) DabA family. Forms a complex with DabB. It depends on Zn(2+) as a cofactor.

The protein resides in the cell inner membrane. Functionally, part of an energy-coupled inorganic carbon pump. This Novosphingobium aromaticivorans (strain ATCC 700278 / DSM 12444 / CCUG 56034 / CIP 105152 / NBRC 16084 / F199) protein is Probable inorganic carbon transporter subunit DabA.